A 495-amino-acid polypeptide reads, in one-letter code: 3-octaprenyl-4-hydroxybenzoate carboxy-lyase (495 aa).

Mn(2+) is bound at residue Asn172. Prenylated FMN contacts are provided by residues Ile175–Arg177, Arg189–Leu191, and Arg194–Gly195. Glu238 serves as a coordination point for Mn(2+). Catalysis depends on Asp287, which acts as the Proton donor.

The protein belongs to the UbiD family. As to quaternary structure, homohexamer. Prenylated FMN serves as cofactor. Mn(2+) is required as a cofactor.

It localises to the cell membrane. The enzyme catalyses a 4-hydroxy-3-(all-trans-polyprenyl)benzoate + H(+) = a 2-(all-trans-polyprenyl)phenol + CO2. It participates in cofactor biosynthesis; ubiquinone biosynthesis. Its function is as follows. Catalyzes the decarboxylation of 3-octaprenyl-4-hydroxy benzoate to 2-octaprenylphenol, an intermediate step in ubiquinone biosynthesis. In Yersinia pestis bv. Antiqua (strain Angola), this protein is 3-octaprenyl-4-hydroxybenzoate carboxy-lyase.